We begin with the raw amino-acid sequence, 397 residues long: Putative protein FAM47D (397 aa).

It belongs to the FAM47 family.

This chain is Putative protein FAM47D (FAM47DP), found in Homo sapiens (Human).